We begin with the raw amino-acid sequence, 189 residues long: Interferon alpha-C (189 aa).

Positions 1–23 (MAPAWSFRLALLLLSCNAICSLG) are cleaved as a signal peptide. 2 cysteine pairs are disulfide-bonded: cysteine 24–cysteine 122 and cysteine 52–cysteine 162.

Belongs to the alpha/beta interferon family.

Its subcellular location is the secreted. In terms of biological role, produced by macrophages, IFN-alpha have antiviral activities. Interferon stimulates the production of two enzymes: a protein kinase and an oligoadenylate synthetase. This chain is Interferon alpha-C (IFNAC), found in Bos taurus (Bovine).